The following is a 483-amino-acid chain: Cysteine proteinase 1, mitochondrial (483 aa).

The N-terminal 30 residues, Met1 to Met30, are a transit peptide targeting the mitochondrion. Active-site residues include Cys102, His398, and Asn421. Position 483 (Lys483) is a propeptide, removed in mature form; by autocatalysis.

The protein belongs to the peptidase C1 family. Homohexamer. Binds to nucleic acids. Binds single-stranded DNA and RNA with higher affinity than double-stranded DNA. The N-terminus of isoform Cytoplasmic is blocked.

The protein resides in the mitochondrion. The protein localises to the cytoplasm. The enzyme catalyses Inactivates bleomycin B2 (a cytotoxic glycometallopeptide) by hydrolysis of a carboxyamide bond of beta-aminoalanine, but also shows general aminopeptidase activity. The specificity varies somewhat with source, but amino acid arylamides of Met, Leu and Ala are preferred.. With respect to regulation, inhibited by E64, a specific inhibitor of cysteine proteases, N-ethylmaleimide, iodacetamide, and mercury and zinc ions. Functionally, the normal physiological role of the enzyme is unknown, but it is not essential for the viability of yeast cells. Has aminopeptidase activity, shortening substrate peptides sequentially by 1 amino acid. Has bleomycin hydrolase activity, which can protect the cell from the toxic effects of bleomycin. Has homocysteine-thiolactonase activity, protecting the cell against homocysteine toxicity. Acts as a repressor in the GAL4 regulatory system, but this does not require either the peptidase or nucleic acid-binding activities. The chain is Cysteine proteinase 1, mitochondrial (LAP3) from Saccharomyces cerevisiae (strain AWRI1631) (Baker's yeast).